The primary structure comprises 1305 residues: RNA-directed RNA polymerase (1305 aa).

The region spanning 563-814 (IIVGDLEATG…KTLIAPFSVE (252 aa)) is the RdRp catalytic domain.

The protein belongs to the reoviridae RNA-directed RNA polymerase family.

The enzyme catalyses RNA(n) + a ribonucleoside 5'-triphosphate = RNA(n+1) + diphosphate. The sequence is that of RNA-directed RNA polymerase (Segment-1) from African horse sickness virus (AHSV).